We begin with the raw amino-acid sequence, 1575 residues long: Mediator of RNA polymerase II transcription subunit 1 (1575 aa).

Residues 1–670 are interaction with the Mediator complex and THRA; the sequence is MKAQGETEDS…YGSSPLERQN (670 aa). Residues 16–590 form an interaction with ESR1 region; it reads MSSLLERLHA…SIKDRHESVG (575 aa). Interaction with the Mediator complex stretches follow at residues 108 to 212 and 215 to 390; these read FYVE…GYLT and SGGH…SLQG. The tract at residues 405–644 is interaction with THRA; sequence PLILNMIRHQ…MAGNTKNHPM (240 aa). Residues 542 to 789 are interaction with VDR; sequence PASSPGYGMT…TDILSDIAEE (248 aa). Position 588 is a phosphoserine (Ser588). The LXXLL motif 1 motif lies at 604-608; that stretch reads LTSLL. Disordered stretches follow at residues 609-706, 737-760, 791-818, 874-895, and 951-1564; these read QITG…QTED, HITPAPSQCSTPPATYPQPVSHPQ, SKLPSTSDDCPPIGTPVRDSSSSGHSQS, SQSGFGEEYFDESSQSGDNDDF, and SGSQ…GEED. Residues 622–632 show a composition bias toward pro residues; the sequence is PTPPHHTPPPV. An interaction with GATA1 region spans residues 622–701; the sequence is PTPPHHTPPP…SSRVPPDKPK (80 aa). Positions 622-701 are interaction with PPARGC1A and THRA; it reads PTPPHHTPPP…SSRVPPDKPK (80 aa). The LXXLL motif 2 signature appears at 645–649; that stretch reads LMNLL. Over residues 655-675 the composition is skewed to polar residues; it reads QDFSTLYGSSPLERQNSSSGS. The interval 656–1066 is interaction with ESR1; that stretch reads DFSTLYGSSP…TPPIPKITIQ (411 aa). Ser664 is subject to Phosphoserine. Residues 696 to 706 show a composition bias toward basic and acidic residues; sequence PPDKPKHQTED. The residue at position 795 (Ser795) is a Phosphoserine. Position 805 is a phosphothreonine (Thr805). Residues 808 to 818 are compositionally biased toward polar residues; it reads RDSSSSGHSQS. An Integrase domain-binding motif (IBM) motif is present at residues 875–902; it reads QSGFGEEYFDESSQSGDNDDFKGFASQA. 3 positions are modified to phosphoserine: Ser887, Ser953, and Ser955. Residues 963 to 974 are compositionally biased toward basic and acidic residues; the sequence is LGKEKTQKRVKE. Positions 976–986 are enriched in gly residues; that stretch reads NGTGASSGSGP. Thr1032 carries the phosphothreonine; by MAPK1 or MAPK3 modification. Over residues 1034-1051 the composition is skewed to low complexity; the sequence is PTSTGGSKSPGSSGRSQT. A phosphothreonine mark is found at Thr1051 and Thr1057. 2 stretches are compositionally biased toward low complexity: residues 1078–1094 and 1101–1152; these read SSHSQYTSSGSVSSSGS and SSSS…SQTG. The residue at position 1158 (Ser1158) is a Phosphoserine. Residues 1158 to 1184 are compositionally biased toward polar residues; that stretch reads SPITKHGLSSGSSSTKMKPQGKPSSLM. Lys1179 carries the N6-acetyllysine modification. The span at 1185 to 1197 shows a compositional bias: low complexity; the sequence is NPSISKPNISPSH. The residue at position 1209 (Ser1209) is a Phosphoserine. Residue Thr1217 is modified to Phosphothreonine. Low complexity-rich tracts occupy residues 1220-1258 and 1265-1295; these read SSKAKSPISSGSSGSHVSGTSSSSGMKSSSGSASSGSVS and SNSCTPSSSSFSSSGSSMSSSQNQHGSSKGK. Ser1225 is subject to Phosphoserine. The segment at 1251-1423 is interaction with TP53; it reads SASSGSVSQK…KPGESGGDGL (173 aa). 2 positions are modified to phosphoserine: Ser1304 and Ser1349. Residues 1331 to 1352 show a composition bias toward polar residues; the sequence is MGASTNSSNHPMSSKHNTSGGE. Basic and acidic residues predominate over residues 1354-1366; it reads QSKREKSDKDKSK. Phosphoserine occurs at positions 1405 and 1435. Composition is skewed to polar residues over residues 1427–1442 and 1450–1484; these read IASSKNYGSPLISGST and PSHSKSPAYTPQNVDSESESGSSIAERSYQNSPSS. Phosphothreonine is present on Thr1442. Thr1459 carries the post-translational modification Phosphothreonine; by MAPK1 or MAPK3. A phosphoserine mark is found at Ser1465, Ser1467, Ser1481, Ser1483, and Ser1484. Basic residues predominate over residues 1498–1507; the sequence is KHKKHKKEKK. Residue Lys1523 is modified to N6-acetyllysine. The span at 1527–1545 shows a compositional bias: polar residues; that stretch reads WSKSPISSDPTASVTNNPI.

It belongs to the Mediator complex subunit 1 family. As to quaternary structure, component of the Mediator complex, which is composed of MED1, MED4, MED6, MED7, MED8, MED9, MED10, MED11, MED12, MED13, MED13L, MED14, MED15, MED16, MED17, MED18, MED19, MED20, MED21, MED22, MED23, MED24, MED25, MED26, MED27, MED29, MED30, MED31, CCNC, CDK8 and CDC2L6/CDK11. The MED12, MED13, CCNC and CDK8 subunits form a distinct module termed the CDK8 module. Mediator containing the CDK8 module is less active than Mediator lacking this module in supporting transcriptional activation. Individual preparations of the Mediator complex lacking one or more distinct subunits have been variously termed ARC, CRSP, DRIP, PC2, SMCC and TRAP. This subunit specifically interacts with a number of nuclear receptors in a ligand-dependent fashion including AR, ESR1, ESR2, PPARA, PPARG, RORA, RXRA, RXRG, THRA, THRB and VDR. Interacts with CTNNB1, GABPA, GLI3, PPARGC1A and TP53. Interacts with GATA1 and YWHAH. Interacts with CLOCK; this interaction requires the presence of THRAP3. Interacts with CCAR1. Interacts with NR4A3. Interacts (via IBM motif) with PSIP1 (via IBD domain); phosphorylation increases its affinity for PSIP1. Interacts with USP22. In terms of processing, phosphorylated by MAPK1 or MAPK3 during G2/M phase which may enhance protein stability and promote entry into the nucleolus. Phosphorylation increases its interaction with PSIP1. Widely expressed in the adult, with high levels of expression in the liver, lung, intestinal mucosa, kidney cortex, thymic cortex, splenic follicle and seminiferous epithelium in testis. Also expressed in the adult heart, brain, spleen and skeletal muscle.

It is found in the nucleus. In terms of biological role, component of the Mediator complex, a coactivator involved in the regulated transcription of nearly all RNA polymerase II-dependent genes. Mediator functions as a bridge to convey information from gene-specific regulatory proteins to the basal RNA polymerase II transcription machinery. Mediator is recruited to promoters by direct interactions with regulatory proteins and serves as a scaffold for the assembly of a functional preinitiation complex with RNA polymerase II and the general transcription factors. Essential for embryogenesis, including development of the central nervous system, heart, liver and placenta and for erythropoiesis. Also required for normal transcriptional control of thyroid-stimulating hormone beta (TSHB) in the pituitary. Acts as a coactivator for GATA1-mediated transcriptional activation during erythroid differentiation of K562 erythroleukemia cells. The protein is Mediator of RNA polymerase II transcription subunit 1 (Med1) of Mus musculus (Mouse).